Reading from the N-terminus, the 270-residue chain is NADPH-dependent 7-cyano-7-deazaguanine reductase (270 aa).

79 to 81 contributes to the substrate binding site; the sequence is IES. 81–82 is a binding site for NADPH; it reads SK. Cysteine 177 (thioimide intermediate) is an active-site residue. Aspartate 184 (proton donor) is an active-site residue. 216–217 is a substrate binding site; sequence HE. NADPH is bound at residue 245-246; that stretch reads RG.

This sequence belongs to the GTP cyclohydrolase I family. QueF type 2 subfamily. As to quaternary structure, homodimer.

Its subcellular location is the cytoplasm. It carries out the reaction 7-aminomethyl-7-carbaguanine + 2 NADP(+) = 7-cyano-7-deazaguanine + 2 NADPH + 3 H(+). The protein operates within tRNA modification; tRNA-queuosine biosynthesis. In terms of biological role, catalyzes the NADPH-dependent reduction of 7-cyano-7-deazaguanine (preQ0) to 7-aminomethyl-7-deazaguanine (preQ1). The protein is NADPH-dependent 7-cyano-7-deazaguanine reductase of Acinetobacter baumannii (strain SDF).